A 169-amino-acid chain; its full sequence is Cell division inhibitor SulA (169 aa).

A ftsZ binding region spans residues 106 to 112 (ALRTGNY). Positions 162–169 (KIHSNLYH) are lon protease binding.

The protein belongs to the SulA family. In terms of assembly, interacts with FtsZ. Post-translationally, is rapidly cleaved and degraded by the Lon protease once DNA damage is repaired.

Its function is as follows. Component of the SOS system and an inhibitor of cell division. Accumulation of SulA causes rapid cessation of cell division and the appearance of long, non-septate filaments. In the presence of GTP, binds a polymerization-competent form of FtsZ in a 1:1 ratio, thus inhibiting FtsZ polymerization and therefore preventing it from participating in the assembly of the Z ring. This mechanism prevents the premature segregation of damaged DNA to daughter cells during cell division. This Escherichia coli O7:K1 (strain IAI39 / ExPEC) protein is Cell division inhibitor SulA.